We begin with the raw amino-acid sequence, 274 residues long: 3-methyl-2-oxobutanoate hydroxymethyltransferase (274 aa).

Mg(2+)-binding residues include D46 and D85. 3-methyl-2-oxobutanoate is bound by residues 46–47 (DS), D85, and K115. Mg(2+) is bound at residue E117. E184 (proton acceptor) is an active-site residue.

Belongs to the PanB family. As to quaternary structure, homodecamer; pentamer of dimers. Mg(2+) serves as cofactor.

It is found in the cytoplasm. The enzyme catalyses 3-methyl-2-oxobutanoate + (6R)-5,10-methylene-5,6,7,8-tetrahydrofolate + H2O = 2-dehydropantoate + (6S)-5,6,7,8-tetrahydrofolate. It participates in cofactor biosynthesis; (R)-pantothenate biosynthesis; (R)-pantoate from 3-methyl-2-oxobutanoate: step 1/2. Catalyzes the reversible reaction in which hydroxymethyl group from 5,10-methylenetetrahydrofolate is transferred onto alpha-ketoisovalerate to form ketopantoate. The polypeptide is 3-methyl-2-oxobutanoate hydroxymethyltransferase (Thermoanaerobacter pseudethanolicus (strain ATCC 33223 / 39E) (Clostridium thermohydrosulfuricum)).